We begin with the raw amino-acid sequence, 288 residues long: Polyketide biosynthesis malonyl CoA-acyl carrier protein transacylase PksC (288 aa).

Active-site residues include Ser-87 and His-193.

This sequence belongs to the FabD family.

It is found in the cytoplasm. The catalysed reaction is holo-[ACP] + malonyl-CoA = malonyl-[ACP] + CoA. Its pathway is antibiotic biosynthesis; bacillaene biosynthesis. Involved in some intermediate steps for the synthesis of the antibiotic polyketide bacillaene which is involved in secondary metabolism. It catalyzes the transfer of the malonyl-CoA group to the acyl-carrier-protein AcpK (Mal-AcpK). This Bacillus subtilis (strain 168) protein is Polyketide biosynthesis malonyl CoA-acyl carrier protein transacylase PksC (pksC).